Reading from the N-terminus, the 386-residue chain is Succinate--CoA ligase [ADP-forming] subunit beta (386 aa).

An ATP-grasp domain is found at 9 to 244 (KEILRKYGVP…HDEEDPLETR (236 aa)). Residues lysine 46, 53–55 (GRG), glutamate 99, cysteine 102, and glutamate 107 contribute to the ATP site. Residues asparagine 199 and aspartate 213 each contribute to the Mg(2+) site. Residues asparagine 264 and 321 to 323 (GIM) each bind substrate.

Belongs to the succinate/malate CoA ligase beta subunit family. Heterotetramer of two alpha and two beta subunits. The cofactor is Mg(2+).

The catalysed reaction is succinate + ATP + CoA = succinyl-CoA + ADP + phosphate. It carries out the reaction GTP + succinate + CoA = succinyl-CoA + GDP + phosphate. The protein operates within carbohydrate metabolism; tricarboxylic acid cycle; succinate from succinyl-CoA (ligase route): step 1/1. Its function is as follows. Succinyl-CoA synthetase functions in the citric acid cycle (TCA), coupling the hydrolysis of succinyl-CoA to the synthesis of either ATP or GTP and thus represents the only step of substrate-level phosphorylation in the TCA. The beta subunit provides nucleotide specificity of the enzyme and binds the substrate succinate, while the binding sites for coenzyme A and phosphate are found in the alpha subunit. This Rickettsia peacockii (strain Rustic) protein is Succinate--CoA ligase [ADP-forming] subunit beta.